Reading from the N-terminus, the 279-residue chain is Large ribosomal subunit protein uL2 (279 aa).

A disordered region spans residues 223-279 (MAMNPVDHPMGGGEGKSKSGGGRKHPKSPWGQLAKGLKTRNKKKASTKLIVRGRKAK). Residues 232–242 (MGGGEGKSKSG) show a composition bias toward gly residues. The segment covering 259–279 (LKTRNKKKASTKLIVRGRKAK) has biased composition (basic residues).

Belongs to the universal ribosomal protein uL2 family. Part of the 50S ribosomal subunit. Forms a bridge to the 30S subunit in the 70S ribosome.

Its function is as follows. One of the primary rRNA binding proteins. Required for association of the 30S and 50S subunits to form the 70S ribosome, for tRNA binding and peptide bond formation. It has been suggested to have peptidyltransferase activity; this is somewhat controversial. Makes several contacts with the 16S rRNA in the 70S ribosome. This Chlorobaculum tepidum (strain ATCC 49652 / DSM 12025 / NBRC 103806 / TLS) (Chlorobium tepidum) protein is Large ribosomal subunit protein uL2.